Here is a 245-residue protein sequence, read N- to C-terminus: Folate receptor gamma (245 aa).

Positions 1 to 22 (MDMAWQMMQLLLLALVTAAGSA) are cleaved as a signal peptide. Cystine bridges form between cysteine 37/cysteine 65, cysteine 57/cysteine 105, cysteine 66/cysteine 109, cysteine 89/cysteine 175, cysteine 96/cysteine 146, cysteine 135/cysteine 209, cysteine 139/cysteine 189, and cysteine 152/cysteine 169. Folate contacts are provided by aspartate 103 and tyrosine 107. N-linked (GlcNAc...) asparagine glycosylation is present at asparagine 121. Folate-binding positions include 124–128 (WRKER), 157–162 (HKGWNW), and serine 196. Residue asparagine 161 is glycosylated (N-linked (GlcNAc...) asparagine). The N-linked (GlcNAc...) asparagine glycan is linked to asparagine 201.

This sequence belongs to the folate receptor family. As to expression, spleen, thymus, bone marrow, ovarian carcinoma, and uterine carcinoma.

Its subcellular location is the secreted. Binds to folate and reduced folic acid derivatives and mediates delivery of 5-methyltetrahydrofolate to the interior of cells. Isoform Short does not bind folate. This chain is Folate receptor gamma (FOLR3), found in Homo sapiens (Human).